Reading from the N-terminus, the 431-residue chain is Histidinol dehydrogenase 1 (431 aa).

3 residues coordinate NAD(+): Tyr127, Gln188, and Asn211. 3 residues coordinate substrate: Ser234, Gln256, and His259. Zn(2+) is bound by residues Gln256 and His259. Catalysis depends on proton acceptor residues Glu324 and His325. Substrate is bound by residues His325, Asp358, Glu412, and His417. Asp358 serves as a coordination point for Zn(2+). His417 contributes to the Zn(2+) binding site.

It belongs to the histidinol dehydrogenase family. The cofactor is Zn(2+).

The enzyme catalyses L-histidinol + 2 NAD(+) + H2O = L-histidine + 2 NADH + 3 H(+). It participates in amino-acid biosynthesis; L-histidine biosynthesis; L-histidine from 5-phospho-alpha-D-ribose 1-diphosphate: step 9/9. In terms of biological role, catalyzes the sequential NAD-dependent oxidations of L-histidinol to L-histidinaldehyde and then to L-histidine. The polypeptide is Histidinol dehydrogenase 1 (Trichormus variabilis (strain ATCC 29413 / PCC 7937) (Anabaena variabilis)).